The chain runs to 833 residues: Scavenger receptor class F member 2 (833 aa).

An N-terminal signal peptide occupies residues 1–33; that stretch reads MEGAGSRGAGPARRQGARGLGLLLLLWLLPGLA. Over 34–433 the chain is Extracellular; the sequence is APQDLNPRGR…ACHLETNQRK (400 aa). 6 consecutive EGF-like domains span residues 63–102, 114–145, 140–174, 175–204, 205–233, and 228–262; these read LGDE…ANCD, CKER…ARCE, WGAR…AQCA, SACY…RSCN, NQCA…ARCD, and FGAR…KYCR. 18 cysteine pairs are disulfide-bonded: C67–C78, C72–C90, C92–C101, C118–C126, C120–C133, C135–C144, C148–C155, C150–C162, C164–C173, C177–C185, C179–C192, C194–C203, C207–C214, C209–C221, C223–C232, C236–C243, C238–C250, and C252–C261. N75 is a glycosylation site (N-linked (GlcNAc...) asparagine). N-linked (GlcNAc...) asparagine glycosylation is found at N302 and N357. The EGF-like 7 domain occupies 364 to 395; that stretch reads CAFVCSDCGSGHCDFQSGRCLCSPGVHGPHCN. 3 cysteine pairs are disulfide-bonded: C368-C376, C371-C383, and C385-C394. N-linked (GlcNAc...) asparagine glycosylation is present at N395. Residues 434-454 form a helical membrane-spanning segment; the sequence is GVMGAGALLTLLLGLLLSLLG. Residues 455-833 are Cytoplasmic-facing; sequence CCCACRGKDS…SRAGTAPGAS (379 aa). Phosphoserine occurs at positions 538 and 600. Positions 578 to 833 are disordered; the sequence is SLEPTGTSTP…SRAGTAPGAS (256 aa). At Y615 the chain carries Phosphotyrosine. Basic and acidic residues predominate over residues 619–630; that stretch reads ARREARPARTRN. A phosphoserine mark is found at S638, S640, and S695. T712 is subject to Phosphothreonine. The span at 748–761 shows a compositional bias: basic and acidic residues; the sequence is ELRDKTRSLGRAEK. Positions 781–798 are enriched in low complexity; sequence ASASEASGSEKAAASAPA. A compositionally biased stretch (basic residues) spans 804 to 816; sequence KKTPIQKPPRKKS.

Homophilic and heterophilic interaction via its extracellular domain. Interacts with SCARF1. The heterophilic interaction with SCARF1, which is stronger than the homophilic interaction with itself, is suppressed by the presence of SCARF1 ligand such as Ac-LDL.

Its subcellular location is the membrane. Functionally, probable adhesion protein, which mediates homophilic and heterophilic interactions. In contrast to SCARF1, it poorly mediates the binding and degradation of acetylated low density lipoprotein (Ac-LDL). The protein is Scavenger receptor class F member 2 (Scarf2) of Mus musculus (Mouse).